The sequence spans 156 residues: Transcription elongation factor GreA (156 aa).

Residues 6–75 (IYLTKEGYEK…ELENMLSKAE (70 aa)) adopt a coiled-coil conformation.

The protein belongs to the GreA/GreB family.

Functionally, necessary for efficient RNA polymerase transcription elongation past template-encoded arresting sites. The arresting sites in DNA have the property of trapping a certain fraction of elongating RNA polymerases that pass through, resulting in locked ternary complexes. Cleavage of the nascent transcript by cleavage factors such as GreA or GreB allows the resumption of elongation from the new 3'terminus. GreA releases sequences of 2 to 3 nucleotides. In Thermosipho africanus (strain TCF52B), this protein is Transcription elongation factor GreA.